The primary structure comprises 861 residues: Leucine--tRNA ligase (861 aa).

The short motif at 42-52 (PYPSGRLHMGH) is the 'HIGH' region element. The short motif at 619-623 (KMSKS) is the 'KMSKS' region element. Lysine 622 lines the ATP pocket.

The protein belongs to the class-I aminoacyl-tRNA synthetase family.

It localises to the cytoplasm. It catalyses the reaction tRNA(Leu) + L-leucine + ATP = L-leucyl-tRNA(Leu) + AMP + diphosphate. The protein is Leucine--tRNA ligase of Haemophilus influenzae (strain 86-028NP).